Reading from the N-terminus, the 611-residue chain is Serine protease FAM111A (611 aa).

Positions 16 to 28 (KCNMKIEHYFSPV) match the PIP-box motif. Lysine 20 participates in a covalent cross-link: Glycyl lysine isopeptide (Lys-Gly) (interchain with G-Cter in SUMO2). Serine 26 is subject to Phosphoserine. Glycyl lysine isopeptide (Lys-Gly) (interchain with G-Cter in SUMO2) cross-links involve residues lysine 30 and lysine 65. The disordered stretch occupies residues 44-73 (ESRGDPRATTNTQAQRFHSPKKNPEDQTMP). Residues 336-611 (KVTKNSSSIK…DVEMMSDEDL (276 aa)) form an interaction with SV40 large T antigen region. Residues histidine 385, aspartate 439, and serine 541 each act as charge relay system in the active site.

Belongs to the FAM111 family. In terms of assembly, interacts (via PIP-box) with PCNA; then interaction is direct. As to quaternary structure, (Microbial infection) Interacts with SV40 virus large T antigen and this interaction is required for efficient viral replication and sustained viral gene expression in restrictive cell types. (Microbial infection) Interacts with vaccinia virus protein OPG079; this interaction promotes the degradation of OPG079. In terms of processing, autocatalytically cleaved; activating the protein. Autocatalytic cleavage takes place in trans.

It is found in the nucleus. It localises to the chromosome. Its subcellular location is the cytoplasm. Functionally, single-stranded DNA-binding serine protease that mediates the proteolytic cleavage of covalent DNA-protein cross-links (DPCs) during DNA synthesis, thereby playing a key role in maintaining genomic integrity. DPCs are highly toxic DNA lesions that interfere with essential chromatin transactions, such as replication and transcription, and which are induced by reactive agents, such as UV light or formaldehyde. Protects replication fork from stalling by removing DPCs, such as covalently trapped topoisomerase 1 (TOP1) adducts on DNA lesion, or poly(ADP-ribose) polymerase 1 (PARP1)-DNA complexes trapped by PARP inhibitors. Required for PCNA loading on replication sites. Promotes S-phase entry and DNA synthesis. Also acts as a restriction factor for some viruses including SV40 polyomavirus and vaccinia virus. Mechanistically, affects nuclear barrier function during viral replication by mediating the disruption of the nuclear pore complex (NPC) via its protease activity. In turn, interacts with vaccinia virus DNA-binding protein OPG079 in the cytoplasm and promotes its degradation without the need of its protease activity but through autophagy. This chain is Serine protease FAM111A, found in Homo sapiens (Human).